The sequence spans 320 residues: Ferrochelatase (320 aa).

Positions 194 and 275 each coordinate Fe cation.

This sequence belongs to the ferrochelatase family.

Its subcellular location is the cytoplasm. The enzyme catalyses heme b + 2 H(+) = protoporphyrin IX + Fe(2+). It participates in porphyrin-containing compound metabolism; protoheme biosynthesis; protoheme from protoporphyrin-IX: step 1/1. Catalyzes the ferrous insertion into protoporphyrin IX. The protein is Ferrochelatase of Vibrio atlanticus (strain LGP32) (Vibrio splendidus (strain Mel32)).